The chain runs to 878 residues: Protein argonaute 6 (878 aa).

Low complexity predominate over residues 1–17 (METSSSLPLSPISIEPE). The disordered stretch occupies residues 1-25 (METSSSLPLSPISIEPEQPSHRDYD). The PAZ domain maps to 259–372 (PVIEFLKANQ…LPLEFCNLVS (114 aa)). One can recognise a Piwi domain in the interval 541–851 (FILCILPERK…AAAQVAQFTK (311 aa)).

The protein belongs to the argonaute family. Ago subfamily. In terms of tissue distribution, expressed in roots, cotyledons and shoot meristematic region.

The protein localises to the nucleus. Its function is as follows. Involved in transcriptional gene silencing (TGS). Component of the RISC complex that associate with the small interfering RNA (siRNA) pathway involved in direct cytosine methylation at endogenous DNA repeats. Required for the accumulation of specific siRNAs derived from transgene and heterochromatin-related endogenous loci. Involved in RNA-directed DNA methylation (RdDM) at specific endogenous loci. Probably not required for the accumulation of siRNAs derived from transgene inverted repeats that induce post-transcriptional gene silencing (PTGS). Associates mainly with small RNAs of 24 nucleotide in length and preferentially recruits small RNAs with a 5' terminal adenosine. Targeted by turnip yellows virus (TuYV) protein P0 (via F-box-like domain) for probable proteasome degradation and thereby inactivating AGO6 function in RNA silencing. The polypeptide is Protein argonaute 6 (AGO6) (Arabidopsis thaliana (Mouse-ear cress)).